Consider the following 333-residue polypeptide: MFIDSAKIYVKAGDGGKGCVSFRHEKFVPKGGPDGGDGGTGGSIFVKADANLATLLDFRYQRHYKAERGEHGQGSRKTGRSAKDVIIKVPVGTIVKDSETGEPLADLVYAGQEVLIAKGGHGGKGNQHFATPTNRAPRYSEPAGVGEERNIDLELKLLADIGLVGFPNAGKSTLISTISAARPKIANYPFTTLEPNLGIVRYAEYQSFVVADIPGIIEGASEGKGLGLKFLKHIERTKVLAILIPADTEDVQAEYDTLIEELRKFDESLCLKPRIVVLSKMDLVLEDASFEVPAFEGEKVVQISSVTGTGLQELKDVLWRIIQESNQQEESIT.

An Obg domain is found at 1 to 158 (MFIDSAKIYV…RNIDLELKLL (158 aa)). The tract at residues 121 to 143 (HGGKGNQHFATPTNRAPRYSEPA) is disordered. The region spanning 159-323 (ADIGLVGFPN…LKDVLWRIIQ (165 aa)) is the OBG-type G domain. Residues 165–172 (GFPNAGKS), 190–194 (FTTLE), 212–215 (DIPG), 279–282 (SKMD), and 304–306 (SSV) each bind GTP. Mg(2+) contacts are provided by S172 and T192.

It belongs to the TRAFAC class OBG-HflX-like GTPase superfamily. OBG GTPase family. As to quaternary structure, monomer. The cofactor is Mg(2+).

It is found in the cytoplasm. Its function is as follows. An essential GTPase which binds GTP, GDP and possibly (p)ppGpp with moderate affinity, with high nucleotide exchange rates and a fairly low GTP hydrolysis rate. Plays a role in control of the cell cycle, stress response, ribosome biogenesis and in those bacteria that undergo differentiation, in morphogenesis control. This chain is GTPase Obg, found in Chloroherpeton thalassium (strain ATCC 35110 / GB-78).